A 677-amino-acid chain; its full sequence is Methionine--tRNA ligase (677 aa).

The short motif at 15–25 (PYANGSIHLGH) is the 'HIGH' region element. Zn(2+) contacts are provided by cysteine 146, cysteine 149, cysteine 159, and cysteine 162. The short motif at 333–337 (KMSKS) is the 'KMSKS' region element. Lysine 336 contacts ATP. Residues 575 to 677 (DFAKVDLRVA…AGAKPGHQVK (103 aa)) enclose the tRNA-binding domain.

It belongs to the class-I aminoacyl-tRNA synthetase family. MetG type 1 subfamily. As to quaternary structure, homodimer. Zn(2+) is required as a cofactor.

The protein localises to the cytoplasm. The catalysed reaction is tRNA(Met) + L-methionine + ATP = L-methionyl-tRNA(Met) + AMP + diphosphate. Its function is as follows. Is required not only for elongation of protein synthesis but also for the initiation of all mRNA translation through initiator tRNA(fMet) aminoacylation. The polypeptide is Methionine--tRNA ligase (Escherichia coli (strain UTI89 / UPEC)).